A 20-amino-acid chain; its full sequence is Putative 18 kDa spermidine-binding protein (20 aa).

As to quaternary structure, dimer of 18 kDa and 60 kDa subunit.

The protein resides in the microsome membrane. Its subcellular location is the endoplasmic reticulum membrane. Its function is as follows. May have spermidine-binding activity. This is Putative 18 kDa spermidine-binding protein from Zea mays (Maize).